The following is a 284-amino-acid chain: 2-dehydro-3-deoxyphosphooctonate aldolase (284 aa).

Belongs to the KdsA family.

It localises to the cytoplasm. It carries out the reaction D-arabinose 5-phosphate + phosphoenolpyruvate + H2O = 3-deoxy-alpha-D-manno-2-octulosonate-8-phosphate + phosphate. The protein operates within carbohydrate biosynthesis; 3-deoxy-D-manno-octulosonate biosynthesis; 3-deoxy-D-manno-octulosonate from D-ribulose 5-phosphate: step 2/3. It participates in bacterial outer membrane biogenesis; lipopolysaccharide biosynthesis. The protein is 2-dehydro-3-deoxyphosphooctonate aldolase of Yersinia pseudotuberculosis serotype O:1b (strain IP 31758).